The primary structure comprises 72 residues: Gene 35 protein (72 aa).

This Mycobacterium phage L5 (Mycobacteriophage L5) protein is Gene 35 protein (35).